Consider the following 230-residue polypeptide: Ribosomal RNA small subunit methyltransferase G (230 aa).

Residues glycine 95, phenylalanine 100, 146-147, and arginine 159 each bind S-adenosyl-L-methionine; that span reads GE.

The protein belongs to the methyltransferase superfamily. RNA methyltransferase RsmG family.

The protein localises to the cytoplasm. Its function is as follows. Specifically methylates the N7 position of a guanine in 16S rRNA. The protein is Ribosomal RNA small subunit methyltransferase G of Parabacteroides distasonis (strain ATCC 8503 / DSM 20701 / CIP 104284 / JCM 5825 / NCTC 11152).